Reading from the N-terminus, the 238-residue chain is ATP synthase subunit a (238 aa).

5 helical membrane-spanning segments follow: residues 18 to 38 (LTILAMSLLTITIIFILVFWA), 75 to 95 (YSLLMFILFSFVFVANNLGLM), 112 to 132 (NFGVDITLSLLVAFICHIEGI), 179 to 199 (VVTGLLLQLAVLSPFTGPLAF), and 203 to 223 (IVWTAFSMFIGFIQAYVFIIL).

The protein belongs to the ATPase A chain family. As to quaternary structure, F-type ATPases have 2 components, CF(1) - the catalytic core - and CF(0) - the membrane proton channel. CF(1) has five subunits: alpha(3), beta(3), gamma(1), delta(1), epsilon(1). CF(0) has three main subunits: a(1), b(2) and c(9-12). The alpha and beta chains form an alternating ring which encloses part of the gamma chain. CF(1) is attached to CF(0) by a central stalk formed by the gamma and epsilon chains, while a peripheral stalk is formed by the delta and b chains.

It localises to the cell membrane. Key component of the proton channel; it plays a direct role in the translocation of protons across the membrane. The sequence is that of ATP synthase subunit a from Streptococcus agalactiae serotype III (strain NEM316).